A 566-amino-acid polypeptide reads, in one-letter code: Beta,beta-carotene 15,15'-dioxygenase (566 aa).

Residues His172, His237, His308, and His514 each coordinate Fe cation. The disordered stretch occupies residues 530–566 (PAETQEVENSDHPTDPTAPELSHSENDFTAGHGGSSL).

This sequence belongs to the carotenoid oxygenase family. It depends on Fe(2+) as a cofactor. Expressed in liver, kidney, small intestine and testis.

Its subcellular location is the cytoplasm. It localises to the cytosol. The enzyme catalyses all-trans-beta-carotene + O2 = 2 all-trans-retinal. It participates in cofactor metabolism; retinol metabolism. In terms of biological role, symmetrically cleaves beta-carotene into two molecules of retinal using a dioxygenase mechanism. This chain is Beta,beta-carotene 15,15'-dioxygenase, found in Mus musculus (Mouse).